Consider the following 448-residue polypeptide: Tubulin beta chain (448 aa).

8 residues coordinate GTP: Q11, E69, S138, G142, T143, G144, N204, and N226. E69 contacts Mg(2+). Residues 425–448 (YQDASISEGEEEYLEEEEPLEHEE) are disordered. The span at 432-448 (EGEEEYLEEEEPLEHEE) shows a compositional bias: acidic residues.

It belongs to the tubulin family. As to quaternary structure, dimer of alpha and beta chains. A typical microtubule is a hollow water-filled tube with an outer diameter of 25 nm and an inner diameter of 15 nM. Alpha-beta heterodimers associate head-to-tail to form protofilaments running lengthwise along the microtubule wall with the beta-tubulin subunit facing the microtubule plus end conferring a structural polarity. Microtubules usually have 13 protofilaments but different protofilament numbers can be found in some organisms and specialized cells. Mg(2+) serves as cofactor.

The protein localises to the cytoplasm. Its subcellular location is the cytoskeleton. Functionally, tubulin is the major constituent of microtubules, a cylinder consisting of laterally associated linear protofilaments composed of alpha- and beta-tubulin heterodimers. Microtubules grow by the addition of GTP-tubulin dimers to the microtubule end, where a stabilizing cap forms. Below the cap, tubulin dimers are in GDP-bound state, owing to GTPase activity of alpha-tubulin. The protein is Tubulin beta chain (benA56) of Aspergillus oryzae (strain ATCC 42149 / RIB 40) (Yellow koji mold).